Consider the following 435-residue polypeptide: Tubulin-like protein TubZ (435 aa).

GTP contacts are provided by residues M25 to G26, G124 to G126, N185, and N209. Positions Q403–F435 are disordered.

It belongs to the FtsZ family. TubZ subfamily. As to quaternary structure, polymerizes to form two-stranded filaments and bundles at higher concentration in the presence of GTP. Binds to the TubR-tubC protein DNA complex.

Its subcellular location is the cytoplasm. The catalysed reaction is GTP + H2O = GDP + phosphate + H(+). Its activity is regulated as follows. GTPase inhibited by GTP-gamma-S, which also stabilizes filaments. Its function is as follows. A tubulin-like, filament forming GTPase; the motor component of the type III plasmid partition system which ensures correct segregation of the pXO1 plasmid. Essential for plasmid replication. The filaments seed from a DNA centromere-like site (tubC)-TubR complex which extends to surround the TubZ filaments. Highly dynamic filaments grow at the plus end and depolymerize at the minus end, a process called treadmilling. TubR-tubC complexes track the depolymerizing minus end of the filament, probably pulling plasmid within the cell. Has a high GTPase activity; in the presence of GTP assembles into dynamic filaments which bind almost exclusively GDP. Filament formation is cooperative, requiring a critical concentration. Formation occurs very quickly and is followed by disassembly as GTP is consumed. Small amounts of GTP-gamma-S stabilize filaments. Has high GTP and dGTPase activity, 6-fold lower ATPase activity. Forms filaments in the presence of ATP that also disassemble. Weakly binds DNA in a GTP-dependent, non-sequence-specific manner; GTP hydrolysis is not required for DNA-binding. This is Tubulin-like protein TubZ from Bacillus anthracis.